We begin with the raw amino-acid sequence, 491 residues long: ADP-specific phosphofructokinase (491 aa).

In terms of domain architecture, ADPK spans 4 to 486 (EEWEQRHAEA…FVAMLAKIKQ (483 aa)). Mg(2+) contacts are provided by E281, E312, and D470. The active-site Proton acceptor is the D470.

This sequence belongs to the carbohydrate kinase PfkC family. Mg(2+) is required as a cofactor.

It localises to the cytoplasm. The enzyme catalyses beta-D-fructose 6-phosphate + ADP = beta-D-fructose 1,6-bisphosphate + AMP + H(+). It functions in the pathway carbohydrate degradation; glycolysis. Catalyzes the phosphorylation of fructose 6-phosphate to fructose 1,6-bisphosphate using ADP as the phosphate donor. The polypeptide is ADP-specific phosphofructokinase (Methanosarcina acetivorans (strain ATCC 35395 / DSM 2834 / JCM 12185 / C2A)).